The sequence spans 813 residues: Phosphate transporter PHO1 homolog 3 (813 aa).

The 359-residue stretch at Met1–Lys359 folds into the SPX domain. The Cytoplasmic portion of the chain corresponds to Met1–Thr411. Positions Glu214–Ser266 are disordered. Residues Met230–Asn241 show a composition bias toward acidic residues. Residues Phe412–Ile432 traverse the membrane as a helical segment. Topologically, residues Arg433–Met450 are extracellular. Residues Phe451–Ile471 form a helical membrane-spanning segment. Over Tyr472–Arg496 the chain is Cytoplasmic. The helical transmembrane segment at Gln497–Leu517 threads the bilayer. Residues Asp518–Glu533 are Extracellular-facing. The helical transmembrane segment at Ile534 to Phe554 threads the bilayer. Over Tyr555–Arg684 the chain is Cytoplasmic. The region spanning Lys618–Asn813 is the EXS domain. Residues Val685–His705 traverse the membrane as a helical segment. Residues Asp706–Lys729 lie on the Extracellular side of the membrane. The chain crosses the membrane as a helical span at residues Val730 to Leu750. The Cytoplasmic segment spans residues Asp751–Asn813.

Belongs to the SYG1 (TC 2.A.94) family. As to expression, expressed in vascular cylinder of roots, leaves and filaments. Expressed in receptacle and stigma apex.

It localises to the cell membrane. In terms of biological role, may transport inorganic phosphate (Pi). This is Phosphate transporter PHO1 homolog 3 (PHO1;H3) from Arabidopsis thaliana (Mouse-ear cress).